The chain runs to 503 residues: Maturase K (503 aa).

The protein belongs to the intron maturase 2 family. MatK subfamily.

It localises to the plastid. Its subcellular location is the chloroplast. Usually encoded in the trnK tRNA gene intron. Probably assists in splicing its own and other chloroplast group II introns. The protein is Maturase K of Eucalyptus globulus subsp. globulus (Tasmanian blue gum).